The sequence spans 60 residues: Bacteriochlorophyll c-binding protein (60 aa).

Methionine 1 bears the N-formylmethionine mark. Histidine 25 lines the a bacteriochlorophyll c pocket.

This sequence belongs to the BChl C/E-binding protein family.

The protein localises to the chlorosome. The protein resides in the chlorosome envelope. Component of the photosynthetic apparatus. The light harvesting B740 complex binds bacteriochlorophyll c. The protein is Bacteriochlorophyll c-binding protein (csmA) of Pelodictyon luteolum.